Consider the following 445-residue polypeptide: Glucose-6-phosphate isomerase (445 aa).

Catalysis depends on Glu287, which acts as the Proton donor. Residues His308 and Lys422 contribute to the active site.

The protein belongs to the GPI family.

The protein localises to the cytoplasm. The catalysed reaction is alpha-D-glucose 6-phosphate = beta-D-fructose 6-phosphate. It functions in the pathway carbohydrate biosynthesis; gluconeogenesis. The protein operates within carbohydrate degradation; glycolysis; D-glyceraldehyde 3-phosphate and glycerone phosphate from D-glucose: step 2/4. Functionally, catalyzes the reversible isomerization of glucose-6-phosphate to fructose-6-phosphate. The chain is Glucose-6-phosphate isomerase from Bacteroides fragilis (strain ATCC 25285 / DSM 2151 / CCUG 4856 / JCM 11019 / LMG 10263 / NCTC 9343 / Onslow / VPI 2553 / EN-2).